The following is a 113-amino-acid chain: DNA-directed RNA polymerase subunit omega (113 aa).

It belongs to the RNA polymerase subunit omega family. In terms of assembly, the RNAP catalytic core consists of 2 alpha, 1 beta, 1 beta' and 1 omega subunit. When a sigma factor is associated with the core the holoenzyme is formed, which can initiate transcription.

It carries out the reaction RNA(n) + a ribonucleoside 5'-triphosphate = RNA(n+1) + diphosphate. Promotes RNA polymerase assembly. Latches the N- and C-terminal regions of the beta' subunit thereby facilitating its interaction with the beta and alpha subunits. The chain is DNA-directed RNA polymerase subunit omega from Rhizorhabdus wittichii (strain DSM 6014 / CCUG 31198 / JCM 15750 / NBRC 105917 / EY 4224 / RW1) (Sphingomonas wittichii).